Here is a 699-residue protein sequence, read N- to C-terminus: UvrABC system protein C (699 aa).

Residues 1-51 (MIQHPTDTPEVAADAAAEPERAAGAAGATPQPSQDAVEPAADVDAATASLA) are compositionally biased toward low complexity. A disordered region spans residues 1–59 (MIQHPTDTPEVAADAAAEPERAAGAAGATPQPSQDAVEPAADVDAATASLAAEDDDEPV). The 79-residue stretch at 92 to 170 (TSPGVYRMLN…IKQLRPRFNV (79 aa)) folds into the GIY-YIG domain. One can recognise a UVR domain in the interval 280 to 315 (RLVKQELAGEMEKASAELEFETAALYRDRLAALSAI).

This sequence belongs to the UvrC family. As to quaternary structure, interacts with UvrB in an incision complex.

It is found in the cytoplasm. In terms of biological role, the UvrABC repair system catalyzes the recognition and processing of DNA lesions. UvrC both incises the 5' and 3' sides of the lesion. The N-terminal half is responsible for the 3' incision and the C-terminal half is responsible for the 5' incision. This Rhodopseudomonas palustris (strain BisB18) protein is UvrABC system protein C.